The following is a 376-amino-acid chain: MSQDYYQILGVSKTANSADLKKAYHKLAKQYHPDNAAAGDTNAEKKFKEINAAYEVLKDEQKRAAYDRFGHDAFQNQQARGGAGSQGGHPFGADINDIFGDFFSDFMGGGGRRKPTSSKVRGSDLKYNLTINLEEAFHGVEKNISFSSEVKCDTCHGSGSEKGETTTTCDACGGVGATRVQQGFFMIEQTCHKCQGNGQIIKNPCKKCHGLGRYHKQRNLSVNIPAGVENGTRIRHPGEGEAGIRGGNNGDLYVDIAIKPHDIYKVDGANLHCKLPISFVNAALGGEVAVPVIEGGKVNLTIPAGTQNGDQLRLCGKGMSKIRSTIRGDMLAHVHVEVPKNLSKRQRELLEELRGESANEKENDGSFFNKMKSLWS.

Positions 4–70 (DYYQILGVSK…QKRAAYDRFG (67 aa)) constitute a J domain. A CR-type zinc finger spans residues 139–217 (GVEKNISFSS…CHGLGRYHKQ (79 aa)). The Zn(2+) site is built by Cys-152, Cys-155, Cys-169, Cys-172, Cys-191, Cys-194, Cys-205, and Cys-208. 4 CXXCXGXG motif repeats span residues 152-159 (CDTCHGSG), 169-176 (CDACGGVG), 191-198 (CHKCQGNG), and 205-212 (CKKCHGLG).

This sequence belongs to the DnaJ family. In terms of assembly, homodimer. The cofactor is Zn(2+).

It localises to the cytoplasm. Its function is as follows. Participates actively in the response to hyperosmotic and heat shock by preventing the aggregation of stress-denatured proteins and by disaggregating proteins, also in an autonomous, DnaK-independent fashion. Unfolded proteins bind initially to DnaJ; upon interaction with the DnaJ-bound protein, DnaK hydrolyzes its bound ATP, resulting in the formation of a stable complex. GrpE releases ADP from DnaK; ATP binding to DnaK triggers the release of the substrate protein, thus completing the reaction cycle. Several rounds of ATP-dependent interactions between DnaJ, DnaK and GrpE are required for fully efficient folding. Also involved, together with DnaK and GrpE, in the DNA replication of plasmids through activation of initiation proteins. The chain is Chaperone protein DnaJ from Rickettsia bellii (strain OSU 85-389).